We begin with the raw amino-acid sequence, 500 residues long: AMP phosphorylase (500 aa).

AMP is bound by residues Gly166, Ser192–Ser197, and Thr201. Catalysis depends on Asp254, which acts as the Proton donor. Residues Ser262 and Lys286 each coordinate AMP.

The protein belongs to the thymidine/pyrimidine-nucleoside phosphorylase family. Type 2 subfamily.

The enzyme catalyses AMP + phosphate = alpha-D-ribose 1,5-bisphosphate + adenine. The catalysed reaction is CMP + phosphate = cytosine + alpha-D-ribose 1,5-bisphosphate. It catalyses the reaction UMP + phosphate = alpha-D-ribose 1,5-bisphosphate + uracil. In terms of biological role, catalyzes the conversion of AMP and phosphate to adenine and ribose 1,5-bisphosphate (R15P). Exhibits phosphorylase activity toward CMP and UMP in addition to AMP. Functions in an archaeal AMP degradation pathway, together with R15P isomerase and RubisCO. In Natronomonas pharaonis (strain ATCC 35678 / DSM 2160 / CIP 103997 / JCM 8858 / NBRC 14720 / NCIMB 2260 / Gabara) (Halobacterium pharaonis), this protein is AMP phosphorylase (deoA).